The sequence spans 183 residues: Ribonuclease H (183 aa).

The RNase H type-1 domain maps to 2–151 (SQARFIAFSD…VDQLAQAAAR (150 aa)). The Mg(2+) site is built by Asp11, Glu57, Asp79, and Asp143.

Belongs to the RNase H family. Monomer. The cofactor is Mg(2+).

The protein resides in the cytoplasm. It carries out the reaction Endonucleolytic cleavage to 5'-phosphomonoester.. Endonuclease that specifically degrades the RNA of RNA-DNA hybrids. The polypeptide is Ribonuclease H (Anaeromyxobacter dehalogenans (strain 2CP-1 / ATCC BAA-258)).